The chain runs to 236 residues: SPbeta prophage-derived uncharacterized lipoprotein YokB (236 aa).

An N-terminal signal peptide occupies residues 1-19 (MNIRFSMLVCVSFIFFTGG). Residue Cys-20 is the site of N-palmitoyl cysteine attachment. Cys-20 carries S-diacylglycerol cysteine lipidation. Disordered regions lie at residues 23–59 (SSAN…TPNM) and 204–236 (VKKV…KDNK). Residues 31 to 53 (SKNKNESKEESSEEGVKENDNKL) show a composition bias toward basic and acidic residues.

The protein resides in the cell membrane. The chain is SPbeta prophage-derived uncharacterized lipoprotein YokB (yokB) from Bacillus subtilis (strain 168).